The sequence spans 139 residues: Ribonuclease P protein component (139 aa).

The segment at 120-139 (KPTTGVEYSPKNEKCESVLP) is disordered. Over residues 129–139 (PKNEKCESVLP) the composition is skewed to basic and acidic residues.

The protein belongs to the RnpA family. Consists of a catalytic RNA component (M1 or rnpB) and a protein subunit.

It carries out the reaction Endonucleolytic cleavage of RNA, removing 5'-extranucleotides from tRNA precursor.. In terms of biological role, RNaseP catalyzes the removal of the 5'-leader sequence from pre-tRNA to produce the mature 5'-terminus. It can also cleave other RNA substrates such as 4.5S RNA. The protein component plays an auxiliary but essential role in vivo by binding to the 5'-leader sequence and broadening the substrate specificity of the ribozyme. The chain is Ribonuclease P protein component from Chlamydia caviae (strain ATCC VR-813 / DSM 19441 / 03DC25 / GPIC) (Chlamydophila caviae).